A 2715-amino-acid chain; its full sequence is Cilia- and flagella-associated protein 46 (2715 aa).

10 TPR repeats span residues 89–122, 175–208, 261–295, 324–359, 426–459, 469–503, 807–845, 936–969, 1111–1144, and 1174–1211; these read CRAQ…AKGE, AELM…IKSH, GDIS…LLFE, PGKL…AQLD, CQVH…DSLG, STRL…TPKD, SRKF…TNGS, LQTL…GIKY, AALY…LPRT, and AESE…LQKP. The tract at residues 1356-1412 is disordered; it reads SHLLLPKKEKENERSKEKEKERSKEKENERSKEKDKEKGKEEKVKEPKQSQSPAPIK. The span at 1361–1403 shows a compositional bias: basic and acidic residues; the sequence is PKKEKENERSKEKEKERSKEKENERSKEKDKEKGKEEKVKEPK. A coiled-coil region spans residues 1362–1401; sequence KKEKENERSKEKEKERSKEKENERSKEKDKEKGKEEKVKE. The TPR 11 repeat unit spans residues 1639–1672; it reads AQCLLLLAQLANKEKNYGQAKKMIAQAQHLGGSE. Positions 1781–1810 form a coiled coil; that stretch reads VDVKLERAKIKRLRAQNEKDEEQKTAYYLE. 3 disordered regions span residues 2000 to 2023, 2294 to 2319, and 2371 to 2399; these read EEEG…EHCR, AVVA…HSTV, and ETEG…KGSI. Basic and acidic residues-rich tracts occupy residues 2300–2311 and 2371–2383; these read GKSKGKDKERKT and ETEG…GRSR. The segment covering 2384 to 2398 has biased composition (basic residues); it reads DPKKRSLAKKGRKGS. TPR repeat units follow at residues 2399 to 2432 and 2504 to 2537; these read IPRT…EMLT and VAVL…EANW. The interval 2541-2567 is disordered; sequence ASPSEDEWRRGGEPRRGFSDLEGQAAA. A compositionally biased stretch (basic and acidic residues) spans 2546 to 2559; the sequence is DEWRRGGEPRRGFS.

Belongs to the CFAP46 family.

The protein localises to the cytoplasm. The protein resides in the cytoskeleton. It localises to the cilium axoneme. Functionally, as part of the central apparatus of the cilium axoneme plays a role in cilium movement. The sequence is that of Cilia- and flagella-associated protein 46 from Homo sapiens (Human).